Here is a 400-residue protein sequence, read N- to C-terminus: Acetate kinase (400 aa).

Position 10 (Asn-10) interacts with Mg(2+). Position 17 (Lys-17) interacts with ATP. Arg-91 contributes to the substrate binding site. Asp-150 (proton donor/acceptor) is an active-site residue. Residues 210 to 214 (HLGNG), 285 to 287 (DCR), and 333 to 337 (GIGEN) contribute to the ATP site. Glu-387 lines the Mg(2+) pocket.

This sequence belongs to the acetokinase family. Homodimer. Mg(2+) serves as cofactor. The cofactor is Mn(2+).

It localises to the cytoplasm. It carries out the reaction acetate + ATP = acetyl phosphate + ADP. It participates in metabolic intermediate biosynthesis; acetyl-CoA biosynthesis; acetyl-CoA from acetate: step 1/2. Functionally, catalyzes the formation of acetyl phosphate from acetate and ATP. Can also catalyze the reverse reaction. This is Acetate kinase from Salmonella typhi.